Here is a 442-residue protein sequence, read N- to C-terminus: Signal recognition particle 54 kDa protein (442 aa).

Residues 106-113 (GLQGSGKT), 186-190 (DTAGR), and 244-247 (TKLD) each bind GTP.

The protein belongs to the GTP-binding SRP family. SRP54 subfamily. In terms of assembly, part of the signal recognition particle protein translocation system, which is composed of SRP and FtsY. Archaeal SRP consists of a 7S RNA molecule of 300 nucleotides and two protein subunits: SRP54 and SRP19.

The protein localises to the cytoplasm. It catalyses the reaction GTP + H2O = GDP + phosphate + H(+). Functionally, involved in targeting and insertion of nascent membrane proteins into the cytoplasmic membrane. Binds to the hydrophobic signal sequence of the ribosome-nascent chain (RNC) as it emerges from the ribosomes. The SRP-RNC complex is then targeted to the cytoplasmic membrane where it interacts with the SRP receptor FtsY. The sequence is that of Signal recognition particle 54 kDa protein from Methanothermobacter thermautotrophicus (strain ATCC 29096 / DSM 1053 / JCM 10044 / NBRC 100330 / Delta H) (Methanobacterium thermoautotrophicum).